The sequence spans 64 residues: Large ribosomal subunit protein bL35 (64 aa).

Basic residues-rich tracts occupy residues 1-15 and 23-42; these read MPKA…KRFR and VRQK…KRTR. Residues 1 to 45 are disordered; it reads MPKAKTHSGASKRFRTTGSGKVVRQKANRRHLLEHKPTKRTRRLD.

It belongs to the bacterial ribosomal protein bL35 family.

This is Large ribosomal subunit protein bL35 from Mycolicibacterium vanbaalenii (strain DSM 7251 / JCM 13017 / BCRC 16820 / KCTC 9966 / NRRL B-24157 / PYR-1) (Mycobacterium vanbaalenii).